We begin with the raw amino-acid sequence, 208 residues long: Large ribosomal subunit protein uL4 (208 aa).

Residues 44–79 (QRQGTHKSKERSEISGSTRKIGRQKGGGGARRGDMN) form a disordered region.

This sequence belongs to the universal ribosomal protein uL4 family. As to quaternary structure, part of the 50S ribosomal subunit.

One of the primary rRNA binding proteins, this protein initially binds near the 5'-end of the 23S rRNA. It is important during the early stages of 50S assembly. It makes multiple contacts with different domains of the 23S rRNA in the assembled 50S subunit and ribosome. Functionally, forms part of the polypeptide exit tunnel. The chain is Large ribosomal subunit protein uL4 from Bacteroides thetaiotaomicron (strain ATCC 29148 / DSM 2079 / JCM 5827 / CCUG 10774 / NCTC 10582 / VPI-5482 / E50).